A 318-amino-acid polypeptide reads, in one-letter code: Esterase FVEG_12639 (318 aa).

Active-site residues include S156, D255, and H285.

Belongs to the AB hydrolase 3 family.

Esterase; part of the Fusarium detoxification of benzoxazolinone cluster 2 (FDB2) involved in the degradation of benzoxazolinones produced by the host plant. Maize, wheat, and rye produce the 2 benzoxazinone phytoanticipins 2,4-dihy-droxy-7-methoxy-1,4-benzoxazin-3-one (DIMBOA) and 2,4-dihydroxy-1,4-benzoxazin-3-one (DIBOA) that, due to their inherent instability once released, spontaneously degrade to the more stable corresponding benzoxazolinones, 6-methoxy-2-benzoxazolinone (MBOA) and 2-benzoxazolinone (BOA), respectively. The first step in the detoxification of benzoxazolinones involves the hydrolysis of the cyclic ester bond of benzoxazolinones by the FDB1 cluster gamma-lactamase MBL1 to aminophenols. MBL1 is able to convert BOA into 2-aminophenol (2-AP), as well as MBOA into 5-methoxy-2-aminophenol (2-AMP). The FDB2 cluster N-malonyltransferase FDB2/NAT1 then metabolizes aminophenols via N-malonylation to non-toxic malonamic acids. FDB2/NAT1 converts 2-AP into N-(2-hydroxyphenyl) malonamic acid (HPMA) and 2-AMP into N-(2-hydroxy-4-methoxyphenyl) malonamic acid (HMPMA). The duplicated dienlactone hydrolases DLH1 and DLH2 may provide redundant function for hydrolyzing the lactone moiety in the BOA molecule. The roles of the amidases an other enzymes encoded by the 2 FDB clusters have not been identified so far. The chain is Esterase FVEG_12639 from Gibberella moniliformis (strain M3125 / FGSC 7600) (Maize ear and stalk rot fungus).